The chain runs to 173 residues: Protein TraS (173 aa).

It localises to the cell inner membrane. In terms of biological role, involved in surface exclusion. This chain is Protein TraS (traS), found in Escherichia coli (strain K12).